A 233-amino-acid chain; its full sequence is Pyridoxal phosphate homeostasis protein (233 aa).

K36 is modified (N6-(pyridoxal phosphate)lysine).

It belongs to the pyridoxal phosphate-binding protein YggS/PROSC family.

Pyridoxal 5'-phosphate (PLP)-binding protein, which is involved in PLP homeostasis. In Vibrio alginolyticus, this protein is Pyridoxal phosphate homeostasis protein.